A 544-amino-acid polypeptide reads, in one-letter code: Glucans biosynthesis protein G (544 aa).

A signal peptide spans 1 to 34; that stretch reads MVSLLRCQSSKPYSSLICSLALGVAFALSGTAYA.

Belongs to the OpgD/OpgG family.

Its subcellular location is the periplasm. It functions in the pathway glycan metabolism; osmoregulated periplasmic glucan (OPG) biosynthesis. Involved in the biosynthesis of osmoregulated periplasmic glucans (OPGs). In Shewanella putrefaciens (strain CN-32 / ATCC BAA-453), this protein is Glucans biosynthesis protein G.